Here is a 229-residue protein sequence, read N- to C-terminus: Uracil-DNA glycosylase (229 aa).

Asp-64 functions as the Proton acceptor in the catalytic mechanism.

The protein belongs to the uracil-DNA glycosylase (UDG) superfamily. UNG family.

It is found in the cytoplasm. The enzyme catalyses Hydrolyzes single-stranded DNA or mismatched double-stranded DNA and polynucleotides, releasing free uracil.. Excises uracil residues from the DNA which can arise as a result of misincorporation of dUMP residues by DNA polymerase or due to deamination of cytosine. This is Uracil-DNA glycosylase from Geobacillus kaustophilus (strain HTA426).